We begin with the raw amino-acid sequence, 85 residues long: MSLLSMLFGNKPKTAHLAKERLQLIIAHERDGGGSSANFLPDLQRELIAVISKYVKVNTEDIRVSLEKQGNYEVLEVNIVLPEKG.

The protein belongs to the MinE family.

Its function is as follows. Prevents the cell division inhibition by proteins MinC and MinD at internal division sites while permitting inhibition at polar sites. This ensures cell division at the proper site by restricting the formation of a division septum at the midpoint of the long axis of the cell. This Dechloromonas aromatica (strain RCB) protein is Cell division topological specificity factor.